A 614-amino-acid chain; its full sequence is Probable ATP-dependent RNA helicase DDX5 (614 aa).

A compositionally biased stretch (basic and acidic residues) spans 1-15 (MSGYSSDRDRGRDRG). A disordered region spans residues 1-39 (MSGYSSDRDRGRDRGFGAPRFGGSRAGPLSGKKFGNPGE). The residue at position 24 (Ser24) is a Phosphoserine. Lys32 carries the post-translational modification N6-acetyllysine; alternate. Residue Lys32 forms a Glycyl lysine isopeptide (Lys-Gly) (interchain with G-Cter in SUMO2); alternate linkage. 2 positions are modified to N6-acetyllysine: Lys33 and Lys40. Residue Lys45 forms a Glycyl lysine isopeptide (Lys-Gly) (interchain with G-Cter in SUMO2) linkage. Residue Lys53 forms a Glycyl lysine isopeptide (Lys-Gly) (interchain with G-Cter in SUMO2); alternate linkage. Residue Lys53 forms a Glycyl lysine isopeptide (Lys-Gly) (interchain with G-Cter in SUMO); alternate linkage. Lys53 is covalently cross-linked (Glycyl lysine isopeptide (Lys-Gly) (interchain with G-Cter in SUMO1); alternate). The short motif at 94 to 122 (LNFYEANFPANVMDVIARQNFTEPTAIQA) is the Q motif element. ATP is bound by residues 114–116 (FTE), Gln121, and 138–145 (AQTGSGKT). Positions 125 to 300 (WPVALSGLDM…EDFLKDYIHI (176 aa)) constitute a Helicase ATP-binding domain. N6-acetyllysine is present on Lys236. The short motif at 248 to 251 (DEAD) is the DEAD box element. Position 297 is a phosphotyrosine (Tyr297). The region spanning 328 to 475 (KLIRLMEEIM…AINPKLLQLV (148 aa)) is the Helicase C-terminal domain. Glycyl lysine isopeptide (Lys-Gly) (interchain with G-Cter in SUMO2) cross-links involve residues Lys340, Lys343, Lys388, Lys391, Lys411, Lys437, Lys451, and Lys470. Positions 477–504 (DRGSGRSRGRGGMKDDRRDRYSAGKRGG) are disordered. Residues 477 to 614 (DRGSGRSRGR…GYPMPTGYSQ (138 aa)) form a transactivation domain region. Ser480 carries the post-translational modification Phosphoserine. Over residues 488-498 (GMKDDRRDRYS) the composition is skewed to basic and acidic residues. Ser520 carries the post-translational modification Phosphoserine. A Glycyl lysine isopeptide (Lys-Gly) (interchain with G-Cter in SUMO2) cross-link involves residue Lys523.

Belongs to the DEAD box helicase family. DDX5/DBP2 subfamily. In terms of assembly, identified in the spliceosome C complex. Component of a ribonucleoprotein complex containing mRNAs and RNA-binding proteins including DDX5, HNRNPH2 and SRSF1 as well as splicing regulator ARVCF. Interacts with RBM4; the interaction occurs in an RNA-independent manner. Interacts with AGO1 and AGO2. Interacts with ESR1, AR, EP300, CREBBP, POLR2A, TP53, RUNX2 and HDAC1. Self-associates. Interacts with DDX17. Interacts with BRDT. The large PER complex involved in the repression of transcriptional termination is composed of at least PER2, CDK9, DDX5, DHX9, NCBP1 and POLR2A (active). Interacts with DHX36; this interaction occurs in a RNA-dependent manner. Interacts with NUPR1. Interacts with ERCC6. Interacts with DDX3X in the cytoplasm; this interaction may be more efficient when both proteins are unphosphorylated. In terms of processing, arg-502 is dimethylated, probably to asymmetric dimethylarginine. Post-translationally, sumoylated; sumoylation, promoted by PIAS1, promotes interaction with HDAC1 and transcriptional repression activity. Sumoylation also significantly increases stability, and reduces polyubiquitination. Polyubiquitinated, leading to proteasomal degradation. In terms of processing, weakly phosphorylated in the G1/S phase of the cell cycle and much more at G2/M, especially at Thr and Tyr residues.

The protein resides in the nucleus. It localises to the nucleolus. The protein localises to the nucleus speckle. Its subcellular location is the cytoplasm. The catalysed reaction is ATP + H2O = ADP + phosphate + H(+). Its function is as follows. Involved in the alternative regulation of pre-mRNA splicing; its RNA helicase activity is necessary for increasing tau exon 10 inclusion and occurs in a RBM4-dependent manner. Binds to the tau pre-mRNA in the stem-loop region downstream of exon 10. The rate of ATP hydrolysis is highly stimulated by single-stranded RNA. Involved in transcriptional regulation; the function is independent of the RNA helicase activity. Transcriptional coactivator for androgen receptor AR but probably not ESR1. Synergizes with DDX17 and SRA1 RNA to activate MYOD1 transcriptional activity and involved in skeletal muscle differentiation. Transcriptional coactivator for p53/TP53 and involved in p53/TP53 transcriptional response to DNA damage and p53/TP53-dependent apoptosis. Transcriptional coactivator for RUNX2 and involved in regulation of osteoblast differentiation. Acts as a transcriptional repressor in a promoter-specific manner; the function probably involves association with histone deacetylases, such as HDAC1. As component of a large PER complex is involved in the inhibition of 3' transcriptional termination of circadian target genes such as PER1 and NR1D1 and the control of the circadian rhythms. The sequence is that of Probable ATP-dependent RNA helicase DDX5 (DDX5) from Homo sapiens (Human).